The following is a 333-amino-acid chain: Anthranilate phosphoribosyltransferase (333 aa).

5-phospho-alpha-D-ribose 1-diphosphate contacts are provided by residues Gly-81, 84-85 (GD), Thr-89, 91-94 (NIST), 109-117 (KHGNRSVSS), and Ala-121. Gly-81 is a binding site for anthranilate. Ser-93 contributes to the Mg(2+) binding site. Asn-112 is an anthranilate binding site. An anthranilate-binding site is contributed by Arg-167. Positions 225 and 226 each coordinate Mg(2+).

It belongs to the anthranilate phosphoribosyltransferase family. In terms of assembly, homodimer. Mg(2+) is required as a cofactor.

It catalyses the reaction N-(5-phospho-beta-D-ribosyl)anthranilate + diphosphate = 5-phospho-alpha-D-ribose 1-diphosphate + anthranilate. It participates in amino-acid biosynthesis; L-tryptophan biosynthesis; L-tryptophan from chorismate: step 2/5. Catalyzes the transfer of the phosphoribosyl group of 5-phosphorylribose-1-pyrophosphate (PRPP) to anthranilate to yield N-(5'-phosphoribosyl)-anthranilate (PRA). The polypeptide is Anthranilate phosphoribosyltransferase (Haemophilus influenzae (strain PittEE)).